We begin with the raw amino-acid sequence, 176 residues long: Sigma intracellular receptor 2 (176 aa).

The Cytoplasmic segment spans residues 1–9; sequence MGALAARRC. A helical membrane pass occupies residues 10–30; it reads VEWLLGLYFVSHIPITLFIDL. The EXPERA domain occupies 10–158; it reads VEWLLGLYFV…PYLIIPLILL (149 aa). The Lumenal portion of the chain corresponds to 31–68; that stretch reads QAVLPPELYPQEFSNLLRWYSKEFKDPLMQEPPVWFKS. A helical membrane pass occupies residues 69 to 89; sequence FLLCELVFQLPFFPIAAYAFF. Cholesterol is bound by residues V75 and Q77. Residues 90–99 are Cytoplasmic-facing; the sequence is KGSCRWIRIP. A helical transmembrane segment spans residues 100–120; it reads AIIYAAHTITTLIPILYTLLF. Residues 121–140 are Lumenal-facing; the sequence is EDFSKAVAFKGQRPESFRER. A helical membrane pass occupies residues 141–161; it reads LTLVGVYAPYLIIPLILLLFM. The Cytoplasmic portion of the chain corresponds to 162 to 176; it reads LRNPYYKYEEKRKKK. The short motif at 172–176 is the ER retention motif element; that stretch reads KRKKK.

This sequence belongs to the TMEM97/sigma-2 receptor family. In terms of assembly, homodimer. Interacts with NPC1; the interaction impairs NPC1-mediated cholesterol transport. Interacts with PGRMC1 and LDLR; the interaction increases LDL internalization. Interacts with histatin 1/HTN1; the interaction induces HTN1-stimulating wound healing. Interacts with TSPO.

The protein localises to the rough endoplasmic reticulum membrane. Its subcellular location is the nucleus membrane. Its function is as follows. Sigma-2 receptor which contributes to ameliorate dysfunctional cellular processes and slow degenerative progression by regulating cell functions including cholesterol biosynthesis/trafficking, membrane trafficking, autophagy, lipid membrane-bound protein trafficking, and receptor stabilization at the cell surface. Forms a ternary complex with PGRMC1 receptor and low density lipoprotein receptor/LDLR at the plasma membrane, which increases LDLR-mediated LDL cholesterol internalization. Decreases lysosomal sterol transporter NPC1 availability to the cell, probably through NPC1-binding, hence controlling lipid transport, including cholesterol and LBPA, outside of late endosome/lysosome. Binds regio- and stereoselective ligand 20(S)-hydroxycholesterol (20(S)-OHC) which enhances TMEM97-NPC1 interaction and decreases TMEM97-PGRMC1 and TMEM97-TSPO interactions, thereby linking OHC binding to cholesterol homeostasis. Also able to bind cholesterol. Binds histatin 1 (Hst 1)/HN1 salivary peptide at the ER membrane, which is critical for increasing mitochondria-ER contacts and stimulating Hst1 wound healing properties. May alter the activity of some cytochrome P450 proteins. Although shows homologies with sterol isomerases (EXPERA domain), not able to catalyze sterol isomerization. However, may act as sensors of these molecules. Acts as a quality control factor in the ER, promoting the proteolytic degradation of nonproductive and extramitochondrial precursor proteins in the ER membrane thus removing them from the ER surface. The chain is Sigma intracellular receptor 2 from Mus musculus (Mouse).